Reading from the N-terminus, the 471-residue chain is Glutamyl-tRNA(Gln) amidotransferase subunit A, mitochondrial (471 aa).

Active-site charge relay system residues include Lys64 and Ser141. Ser165 serves as the catalytic Acyl-ester intermediate.

Belongs to the amidase family. GatA subfamily. Subunit of the heterotrimeric GatCAB amidotransferase (AdT) complex, composed of A, B and C subunits.

It localises to the mitochondrion. It catalyses the reaction L-glutamyl-tRNA(Gln) + L-glutamine + ATP + H2O = L-glutaminyl-tRNA(Gln) + L-glutamate + ADP + phosphate + H(+). Allows the formation of correctly charged Gln-tRNA(Gln) through the transamidation of misacylated Glu-tRNA(Gln) in the mitochondria. The reaction takes place in the presence of glutamine and ATP through an activated gamma-phospho-Glu-tRNA(Gln). This Schizosaccharomyces pombe (strain 972 / ATCC 24843) (Fission yeast) protein is Glutamyl-tRNA(Gln) amidotransferase subunit A, mitochondrial.